Here is a 221-residue protein sequence, read N- to C-terminus: DNA mismatch repair protein MutH (221 aa).

It belongs to the MutH family.

It is found in the cytoplasm. Sequence-specific endonuclease that cleaves unmethylated GATC sequences. It is involved in DNA mismatch repair. The protein is DNA mismatch repair protein MutH of Vibrio cholerae serotype O1 (strain ATCC 39541 / Classical Ogawa 395 / O395).